Here is a 524-residue protein sequence, read N- to C-terminus: MLKDIHQHRILILDFGSQYAQLIARRVREIGVYCELMPCDIDEETIRDFNPHGIILSGGPETVTLSHTLRAPAFIFEIGCPVLGICYGMQTMAYQLGGKVNRTAKAEFGHAQLRVLNPAFLFDGIEDQVSPQGEPLLDVWMSHGDIVSELPPGFEATACTDNSPLAAMADFKRRFFGLQFHPEVTHTPQGDRILAHFVIHICQCIPNWTTKHIIEDSIRDIQEKVGKEQVIVGLSGGVDSAVTATLVHKAIGDQLVCVLVDTGLLRLNEVDEVLNVFQKHLGAKVICVDAKDRFMKALKGISDPEEKRKIAGEQFIRVFEEQAKKLNVKWLGQGTIYPDVIESAKTKTGKVHIIKTHHNVGGLPLNMELKLIEPLRELFKDEVRKLGLELGLPADLIYRHPFPGPGLAIRILGEVSAEYINILKQADAIFIEELKKSDYYHQVSQAFAVFMPLKSVGVKGDARHYGYIIALRAVKTVDFMTAQWADLPHEFLSKVSHRIVNEIKEVSRVVYDMTNKPPATIEWE.

Residues 9–207 (RILILDFGSQ…VIHICQCIPN (199 aa)) enclose the Glutamine amidotransferase type-1 domain. Cys86 (nucleophile) is an active-site residue. Residues His181 and Glu183 contribute to the active site. Residues 208-399 (WTTKHIIEDS…LGLPADLIYR (192 aa)) enclose the GMPS ATP-PPase domain. Position 235–241 (235–241 (SGGVDSA)) interacts with ATP.

In terms of assembly, homodimer.

The catalysed reaction is XMP + L-glutamine + ATP + H2O = GMP + L-glutamate + AMP + diphosphate + 2 H(+). The protein operates within purine metabolism; GMP biosynthesis; GMP from XMP (L-Gln route): step 1/1. Functionally, catalyzes the synthesis of GMP from XMP. In Coxiella burnetii (strain RSA 331 / Henzerling II), this protein is GMP synthase [glutamine-hydrolyzing].